We begin with the raw amino-acid sequence, 161 residues long: 2-C-methyl-D-erythritol 2,4-cyclodiphosphate synthase (161 aa).

Residues D10 and H12 each contribute to the a divalent metal cation site. 4-CDP-2-C-methyl-D-erythritol 2-phosphate-binding positions include 10–12 (DVH) and 36–37 (HS). H44 is a binding site for a divalent metal cation. 4-CDP-2-C-methyl-D-erythritol 2-phosphate-binding positions include 58–60 (DIG), 63–67 (FPDTD), 102–108 (AQAPKMA), 134–137 (TTTE), F141, and R144.

It belongs to the IspF family. Homotrimer. It depends on a divalent metal cation as a cofactor.

The catalysed reaction is 4-CDP-2-C-methyl-D-erythritol 2-phosphate = 2-C-methyl-D-erythritol 2,4-cyclic diphosphate + CMP. It functions in the pathway isoprenoid biosynthesis; isopentenyl diphosphate biosynthesis via DXP pathway; isopentenyl diphosphate from 1-deoxy-D-xylulose 5-phosphate: step 4/6. In terms of biological role, involved in the biosynthesis of isopentenyl diphosphate (IPP) and dimethylallyl diphosphate (DMAPP), two major building blocks of isoprenoid compounds. Catalyzes the conversion of 4-diphosphocytidyl-2-C-methyl-D-erythritol 2-phosphate (CDP-ME2P) to 2-C-methyl-D-erythritol 2,4-cyclodiphosphate (ME-CPP) with a corresponding release of cytidine 5-monophosphate (CMP). This Shewanella baltica (strain OS155 / ATCC BAA-1091) protein is 2-C-methyl-D-erythritol 2,4-cyclodiphosphate synthase.